The following is a 363-amino-acid chain: tRNA dimethylallyltransferase (363 aa).

Residues 1–55 (MLACNDDTSLYLLVKQVTKKEIYSNDLENGNVKRGASMQSLYLIGDPKCCRNNSS) form a unknown insert region. 65 to 72 (GPTASGKS) lines the ATP pocket. 67–72 (TASGKS) lines the substrate pocket. Interaction with substrate tRNA regions lie at residues 90–93 (DSMQ) and 214–218 (QRLIR).

Belongs to the IPP transferase family. As to quaternary structure, monomer. The cofactor is Mg(2+).

The catalysed reaction is adenosine(37) in tRNA + dimethylallyl diphosphate = N(6)-dimethylallyladenosine(37) in tRNA + diphosphate. In terms of biological role, catalyzes the transfer of a dimethylallyl group onto the adenine at position 37 in tRNAs that read codons beginning with uridine, leading to the formation of N6-(dimethylallyl)adenosine (i(6)A). In Rickettsia conorii (strain ATCC VR-613 / Malish 7), this protein is tRNA dimethylallyltransferase.